A 472-amino-acid chain; its full sequence is RNA pseudouridine synthase 6, chloroplastic (472 aa).

The N-terminal 66 residues, M1–S66, are a transit peptide targeting the chloroplast. Residues V101–K208 enclose the S4 RNA-binding domain. D261 is a catalytic residue.

It belongs to the pseudouridine synthase RluA family.

The protein localises to the plastid. It localises to the chloroplast. The enzyme catalyses a uridine in RNA = a pseudouridine in RNA. The polypeptide is RNA pseudouridine synthase 6, chloroplastic (Arabidopsis thaliana (Mouse-ear cress)).